The primary structure comprises 560 residues: Glutamate--tRNA ligase (560 aa).

A 'HIGH' region motif is present at residues Pro108–His118.

It belongs to the class-I aminoacyl-tRNA synthetase family. Glutamate--tRNA ligase type 2 subfamily.

It is found in the cytoplasm. It catalyses the reaction tRNA(Glu) + L-glutamate + ATP = L-glutamyl-tRNA(Glu) + AMP + diphosphate. Its function is as follows. Catalyzes the attachment of glutamate to tRNA(Glu) in a two-step reaction: glutamate is first activated by ATP to form Glu-AMP and then transferred to the acceptor end of tRNA(Glu). The polypeptide is Glutamate--tRNA ligase (Methanocorpusculum labreanum (strain ATCC 43576 / DSM 4855 / Z)).